Consider the following 437-residue polypeptide: MEHQLLSVAIDDTDSQYGGCTTHLTGLILKELGNRALLADYPLLVRLNPNIPWRTRGNAATVLRLLYDGDPKELMETLWSIIEEYTEPRPPLPGKSPGLVVAPGSPWESERLRWLYRKALSDVVTLDVATESLSKYGALWRGGRGVIGAASSLAALSPGEPYTFELTFYRRPENWGSRRCVYSDKVAYLEGQSSGTLNNLELDEGTTSAAPGGPDPVLAGFRGTDPGELWRFDEALCERPHFAVLYRSNQHTGVHLQAQEPRIYRSVNITVTVRSPPLKLPGGHVIVEVSDGVNTYDAAFYEDSGPLARAAELLYPGDVIIIAGGVRPYSPRGKLTISVEAMKVVGVAQRRVQVPPRCPRCGARMESLGRGKGYRCPRCGLRSSGHKQSLVVERELLPGSYYYKIGRARHLSPVGARLPTMDRLPVTINVSDVLRVY.

The protein belongs to the TiaS family.

It localises to the cytoplasm. It carries out the reaction cytidine(34) in tRNA(Ile2) + agmatine + ATP + H2O = 2-agmatinylcytidine(34) in tRNA(Ile2) + AMP + 2 phosphate + 2 H(+). In terms of biological role, ATP-dependent agmatine transferase that catalyzes the formation of 2-agmatinylcytidine (agm2C) at the wobble position (C34) of tRNA(Ile2), converting the codon specificity from AUG to AUA. In Acidilobus saccharovorans (strain DSM 16705 / JCM 18335 / VKM B-2471 / 345-15), this protein is tRNA(Ile2) 2-agmatinylcytidine synthetase TiaS.